The chain runs to 628 residues: tRNA uridine 5-carboxymethylaminomethyl modification enzyme MnmG (628 aa).

14-19 (GAGHAG) is a binding site for FAD. 273 to 287 (GPRYCPSIEDKVVRF) provides a ligand contact to NAD(+).

Belongs to the MnmG family. As to quaternary structure, homodimer. Heterotetramer of two MnmE and two MnmG subunits. FAD serves as cofactor.

The protein resides in the cytoplasm. Its function is as follows. NAD-binding protein involved in the addition of a carboxymethylaminomethyl (cmnm) group at the wobble position (U34) of certain tRNAs, forming tRNA-cmnm(5)s(2)U34. This chain is tRNA uridine 5-carboxymethylaminomethyl modification enzyme MnmG, found in Bacillus velezensis (strain DSM 23117 / BGSC 10A6 / LMG 26770 / FZB42) (Bacillus amyloliquefaciens subsp. plantarum).